Here is a 48-residue protein sequence, read N- to C-terminus: Sperm protamine P1 (48 aa).

Belongs to the protamine P1 family. In terms of assembly, cross-linked by interchain disulfide bonds around the DNA-helix. Testis.

The protein localises to the nucleus. The protein resides in the chromosome. Functionally, protamines substitute for histones in the chromatin of sperm during the haploid phase of spermatogenesis. They compact sperm DNA into a highly condensed, stable and inactive complex. The chain is Sperm protamine P1 (PRM1) from Cavia porcellus (Guinea pig).